The following is a 630-amino-acid chain: GTPase-activating protein NEL1 (630 aa).

The protein belongs to the SEC23/SEC24 family. SEC23 subfamily.

Its subcellular location is the cytoplasm. It localises to the nucleus. Its function is as follows. Acts as a GTPase-activating protein (GAP) for SAR1. Contrary to its SEC23 homolog, NEL1 does not associate with SEC24 and its homologs, nor does it associate with the COPII components, suggesting that it is unlikely that NEL1 functions as a structural component of the vesicle coat machinery. May function as a signaling molecule. This chain is GTPase-activating protein NEL1, found in Saccharomyces cerevisiae (strain ATCC 204508 / S288c) (Baker's yeast).